The chain runs to 472 residues: Mixed lineage kinase domain-like protein (472 aa).

The segment at 1 to 143 (MDKLGQIIKL…QEDRQDAEED (143 aa)) is N-terminal bundle and brace (NBB); mediates INSP6 binding. The stretch at 61-81 (LGRFDEVLKEANQQIEKFSKK) forms a coiled coil. At serine 124 the chain carries Phosphoserine. Residues 138 to 229 (QDAEEDGNEN…VFNNPQAESV (92 aa)) adopt a coiled-coil conformation. The 265-residue stretch at 192–456 (GPPWTKLKTS…DGRSLSGRER (265 aa)) folds into the Protein kinase domain. Residues 198 to 206 (LKTSKMSTI) and lysine 219 contribute to the ATP site. Phosphoserine; by RIPK3 occurs at positions 345 and 347. The residue at position 349 (threonine 349) is a Phosphothreonine; by RIPK3. Residue serine 352 is modified to Phosphoserine; by RIPK3.

The protein belongs to the protein kinase superfamily. Homooligomer. Homotrimer; forms homotrimers on necroptosis induction. Upon TNF-induced necrosis, forms in complex with PGAM5, RIPK1 and RIPK3. Within this complex, may play a role in the proper targeting of RIPK1-RIPK3 to its downstream effector PGAM5. Interacts with RIPK3; the interaction is direct and promotes its phosphorylation and subsequent activation. In terms of processing, phosphorylation by RIPK3 induces a conformational switch that is required for necroptosis. It also induces homotrimerization and localization to the plasma membrane. In terms of tissue distribution, highly expressed in thymus, colon, intestine, liver, spleen and lung. Expressed at much lower level in skeletal muscle, heart and kidney. Not detected in brain.

Its subcellular location is the cytoplasm. It is found in the cell membrane. The protein localises to the nucleus. With respect to regulation, activated via binding to highly phosphorylated inositol phosphates such as inositolhexakisphosphate (InsP6) which mediates the release of an N-terminal auto-inhibitory region. Activation requires not only RIPK3-dependent phosphorylation but also binding to highly phosphorylated inositol phosphates. Its function is as follows. Pseudokinase that plays a key role in TNF-induced necroptosis, a programmed cell death process. Does not have protein kinase activity. Activated following phosphorylation by RIPK3, leading to homotrimerization, localization to the plasma membrane and execution of programmed necrosis characterized by calcium influx and plasma membrane damage. In addition to TNF-induced necroptosis, necroptosis can also take place in the nucleus in response to orthomyxoviruses infection: following ZBP1 activation, which senses double-stranded Z-RNA structures, nuclear RIPK3 catalyzes phosphorylation and activation of MLKL, promoting disruption of the nuclear envelope and leakage of cellular DNA into the cytosol. Binds to highly phosphorylated inositol phosphates such as inositolhexakisphosphate (InsP6) which is essential for its necroptotic function. The polypeptide is Mixed lineage kinase domain-like protein (Mus musculus (Mouse)).